The primary structure comprises 259 residues: Imidazole glycerol phosphate synthase subunit HisF (259 aa).

Residues D11 and D130 contribute to the active site.

This sequence belongs to the HisA/HisF family. Heterodimer of HisH and HisF.

Its subcellular location is the cytoplasm. The catalysed reaction is 5-[(5-phospho-1-deoxy-D-ribulos-1-ylimino)methylamino]-1-(5-phospho-beta-D-ribosyl)imidazole-4-carboxamide + L-glutamine = D-erythro-1-(imidazol-4-yl)glycerol 3-phosphate + 5-amino-1-(5-phospho-beta-D-ribosyl)imidazole-4-carboxamide + L-glutamate + H(+). The protein operates within amino-acid biosynthesis; L-histidine biosynthesis; L-histidine from 5-phospho-alpha-D-ribose 1-diphosphate: step 5/9. In terms of biological role, IGPS catalyzes the conversion of PRFAR and glutamine to IGP, AICAR and glutamate. The HisF subunit catalyzes the cyclization activity that produces IGP and AICAR from PRFAR using the ammonia provided by the HisH subunit. The protein is Imidazole glycerol phosphate synthase subunit HisF of Desulforapulum autotrophicum (strain ATCC 43914 / DSM 3382 / VKM B-1955 / HRM2) (Desulfobacterium autotrophicum).